A 532-amino-acid chain; its full sequence is Zinc finger protein 350 (532 aa).

Residues Ile-8–Ser-79 form the KRAB domain. C2H2-type zinc fingers lie at residues His-206–His-228, His-234–His-256, Tyr-262–His-284, Tyr-290–His-312, Tyr-318–His-340, Phe-346–His-368, Phe-374–His-396, and Tyr-402–His-424. A compositionally biased stretch (basic and acidic residues) spans Glu-427–Ser-443. Residues Glu-427 to Pro-465 form a disordered region. The segment covering Leu-445–Pro-465 has biased composition (polar residues).

Belongs to the krueppel C2H2-type zinc-finger protein family. Interacts with BRCA1. Interacts with RNF11. Widely expressed.

The protein localises to the nucleus. Its subcellular location is the nucleus matrix. Transcriptional repressor. Binds to a specific sequence, 5'-GGGxxxCAGxxxTTT-3', within GADD45 intron 3. The protein is Zinc finger protein 350 (ZNF350) of Homo sapiens (Human).